The primary structure comprises 382 residues: Methylthioribose-1-phosphate isomerase (382 aa).

Catalysis depends on D257, which acts as the Proton donor.

Belongs to the eIF-2B alpha/beta/delta subunits family. MtnA subfamily.

It localises to the cytoplasm. The protein resides in the nucleus. It catalyses the reaction 5-(methylsulfanyl)-alpha-D-ribose 1-phosphate = 5-(methylsulfanyl)-D-ribulose 1-phosphate. The protein operates within amino-acid biosynthesis; L-methionine biosynthesis via salvage pathway; L-methionine from S-methyl-5-thio-alpha-D-ribose 1-phosphate: step 1/6. Functionally, catalyzes the interconversion of methylthioribose-1-phosphate (MTR-1-P) into methylthioribulose-1-phosphate (MTRu-1-P). In Paracoccidioides brasiliensis (strain Pb18), this protein is Methylthioribose-1-phosphate isomerase.